A 92-amino-acid polypeptide reads, in one-letter code: Small ribosomal subunit protein uS19 (92 aa).

A disordered region spans residues 1–27 (MARSIKKGPFADDHLKKKVEAQSGSEK). Basic and acidic residues predominate over residues 9 to 27 (PFADDHLKKKVEAQSGSEK).

It belongs to the universal ribosomal protein uS19 family.

In terms of biological role, protein S19 forms a complex with S13 that binds strongly to the 16S ribosomal RNA. This Staphylococcus saprophyticus subsp. saprophyticus (strain ATCC 15305 / DSM 20229 / NCIMB 8711 / NCTC 7292 / S-41) protein is Small ribosomal subunit protein uS19.